A 135-amino-acid polypeptide reads, in one-letter code: Galectin-1 (135 aa).

A2 carries the post-translational modification N-acetylalanine. One can recognise a Galectin domain in the interval 4 to 135 (GLVASNLNLK…DFKIKCVAFE (132 aa)). N6-acetyllysine occurs at positions 13 and 29. Residue S30 is modified to Phosphoserine. Residues 45 to 49 (HFNPR), H53, N62, and 69 to 72 (WGAE) contribute to the a beta-D-galactoside site. K108 is modified (N6-acetyllysine; alternate). N6-succinyllysine; alternate is present on K108. Residue K128 is modified to N6-acetyllysine.

In terms of assembly, homodimer. Binds LGALS3BP. Interacts with CD2, CD3, CD4, CD6, CD7, CD43, ALCAM and CD45. Interacts with laminin (via poly-N-acetyllactosamine). Interacts with SUSD2. Interacts with cargo receptor TMED10; the interaction mediates the translocation from the cytoplasm into the ERGIC (endoplasmic reticulum-Golgi intermediate compartment) and thereby secretion.

The protein resides in the secreted. Its subcellular location is the extracellular space. It is found in the extracellular matrix. It localises to the cytoplasm. In terms of biological role, lectin that binds beta-galactoside and a wide array of complex carbohydrates. Plays a role in regulating apoptosis, cell proliferation and cell differentiation. Inhibits CD45 protein phosphatase activity and therefore the dephosphorylation of Lyn kinase. Strong inducer of T-cell apoptosis. This chain is Galectin-1 (LGALS1), found in Bos taurus (Bovine).